A 127-amino-acid polypeptide reads, in one-letter code: MRHRKSGRQLNRNSSHRKAMFSNMASSLVSHEIIKTTLPKAKELRRVIEPLITLAKTDSVANRRLAFARTRDNAVVAKLFTELGPRFAKRPGGYTRIMKCGFRTGDKAPMAYIELVDRPAQEAASAE.

It belongs to the bacterial ribosomal protein bL17 family. Part of the 50S ribosomal subunit. Contacts protein L32.

The protein is Large ribosomal subunit protein bL17 of Photobacterium profundum (strain SS9).